We begin with the raw amino-acid sequence, 274 residues long: 2,3,4,5-tetrahydropyridine-2,6-dicarboxylate N-succinyltransferase (274 aa).

Belongs to the transferase hexapeptide repeat family.

The protein resides in the cytoplasm. It catalyses the reaction (S)-2,3,4,5-tetrahydrodipicolinate + succinyl-CoA + H2O = (S)-2-succinylamino-6-oxoheptanedioate + CoA. The protein operates within amino-acid biosynthesis; L-lysine biosynthesis via DAP pathway; LL-2,6-diaminopimelate from (S)-tetrahydrodipicolinate (succinylase route): step 1/3. The sequence is that of 2,3,4,5-tetrahydropyridine-2,6-dicarboxylate N-succinyltransferase from Proteus mirabilis (strain HI4320).